Here is a 428-residue protein sequence, read N- to C-terminus: tRNA(Ile)-lysidine synthase (428 aa).

Position 28 to 33 (28 to 33 (SGGVDS)) interacts with ATP.

The protein belongs to the tRNA(Ile)-lysidine synthase family.

The protein resides in the cytoplasm. The catalysed reaction is cytidine(34) in tRNA(Ile2) + L-lysine + ATP = lysidine(34) in tRNA(Ile2) + AMP + diphosphate + H(+). Functionally, ligates lysine onto the cytidine present at position 34 of the AUA codon-specific tRNA(Ile) that contains the anticodon CAU, in an ATP-dependent manner. Cytidine is converted to lysidine, thus changing the amino acid specificity of the tRNA from methionine to isoleucine. The protein is tRNA(Ile)-lysidine synthase of Streptococcus pyogenes serotype M6 (strain ATCC BAA-946 / MGAS10394).